Here is a 460-residue protein sequence, read N- to C-terminus: 3'3'-cGAMP-specific phosphodiesterase 3 (460 aa).

The 162-residue stretch at 28 to 189 (PPEHCIRCCW…IPLFSRIALL (162 aa)) folds into the HD domain. The 196-residue stretch at 260–455 (DDAYLECIVT…LPDEYTQLPH (196 aa)) folds into the HD-GYP domain. 2 residues coordinate a divalent metal cation: His-317 and Asp-318. Residue Lys-321 is the Proton donor of the active site. 4 residues coordinate a divalent metal cation: His-346, His-370, His-371, and Asp-399.

As to quaternary structure, monomer. It depends on Mn(2+) as a cofactor.

It carries out the reaction 3',3'-cGAMP + H2O = 5'-pApG-3' + H(+). Its function is as follows. Phosphodiesterase (PDE) that catalyzes the hydrolysis of 3'3'-cyclic GMP-AMP (3'3'-cGAMP), leading to linear 5'-pApG. Counteracts the function of the 3'3'-cGAMP synthase DncV, and is involved in the modulation of intracellular 3'3'-cGAMP levels. Enhances bacterial chemotaxis and inhibits intestinal colonization in vivo. Thus exerts a crucial role in regulating bacterial infectivity through catalyzing 3'3'-cGAMP degradation. Is specific for 3'3'-cGAMP since it cannot degrade other cGAMP linkage isomers (3'2'-, 2'3'-, and 2'2'-cGAMPs); is also able to hydrolyze c-di-GMP but not c-di-AMP. This Vibrio cholerae serotype O1 (strain ATCC 39315 / El Tor Inaba N16961) protein is 3'3'-cGAMP-specific phosphodiesterase 3.